The primary structure comprises 527 residues: Nucleus accumbens-associated protein 1 (527 aa).

The BTB domain occupies 30–94 (CDVSVVVKGH…CYTGRLSMNV (65 aa)). The segment at 131–153 (QGLHAEEAPSSEPQSPVAQTSGW) is disordered. The span at 141-152 (SEPQSPVAQTSG) shows a compositional bias: polar residues. Lys-167 participates in a covalent cross-link: Glycyl lysine isopeptide (Lys-Gly) (interchain with G-Cter in SUMO1); alternate. Lys-167 is covalently cross-linked (Glycyl lysine isopeptide (Lys-Gly) (interchain with G-Cter in SUMO2); alternate). Lys-183 participates in a covalent cross-link: Glycyl lysine isopeptide (Lys-Gly) (interchain with G-Cter in SUMO2). A Phosphoserine modification is found at Ser-188. Positions 210–292 (DLAANRPHQP…DEEEDGGEEG (83 aa)) are disordered. Over residues 225–251 (APVVAAAQPAVAAGAGQPAGGVAAAGG) the composition is skewed to low complexity. Over residues 255-277 (GPSTSERTSPGTSSAYTSDSPGS) the composition is skewed to polar residues. Residue Ser-259 is modified to Phosphoserine; by PKC. Acidic residues predominate over residues 281–292 (EEDEEEDGGEEG). Glycyl lysine isopeptide (Lys-Gly) (interchain with G-Cter in SUMO2) cross-links involve residues Lys-318, Lys-452, Lys-480, Lys-483, and Lys-498. The BEN domain maps to 374–471 (GTNVYITRAQ…DMCTNARRVV (98 aa)).

In terms of assembly, homooligomer; mediated by the BTB domain. Interacts with HDAC3 and HDAC4. Interacts (via BTB domain) with CUL3, PSMD7 and RCOR1. Overexpressed in several types of carcinomas including ovarian serous carcinomas. Expression levels positively correlate with tumor recurrence in ovarian serous carcinomas, and intense immunoreactivity in primary ovarian tumors predicts early recurrence. Up-regulated in ovarian carcinomas after chemotherapy, suggesting a role in development of chemotherapy resistance in ovarian cancer.

The protein localises to the nucleus. Its subcellular location is the cytoplasm. Its function is as follows. Functions as a transcriptional repressor. Seems to function as a transcriptional corepressor in neuronal cells through recruitment of HDAC3 and HDAC4. Contributes to tumor progression, and tumor cell proliferation and survival. This may be mediated at least in part through repressing transcriptional activity of GADD45GIP1. Required for recruiting the proteasome from the nucleus to the cytoplasm and dendritic spines. The sequence is that of Nucleus accumbens-associated protein 1 (NACC1) from Homo sapiens (Human).